The chain runs to 56 residues: Large ribosomal subunit protein bL32c (56 aa).

The protein belongs to the bacterial ribosomal protein bL32 family.

The protein resides in the plastid. Its subcellular location is the chloroplast. The polypeptide is Large ribosomal subunit protein bL32c (Tupiella akineta (Green alga)).